Here is a 347-residue protein sequence, read N- to C-terminus: GPN-loop GTPase 2 (347 aa).

Position 12 to 17 (Gly-12 to Thr-17) interacts with GTP. Positions Gly-69–Asn-71 match the Gly-Pro-Asn (GPN)-loop; involved in dimer interface motif. Ser-175–Asp-178 contacts GTP.

The protein belongs to the GPN-loop GTPase family. In terms of assembly, heterodimers with NPA3/GPN1 or GPN3. Binds to RNA polymerase II (RNAPII).

It localises to the cytoplasm. Small GTPase required for proper localization of RNA polymerase II and III (RNAPII and RNAPIII). May act at an RNAP assembly step prior to nuclear import. Required for establishment of sister chromatid cohesion. This is GPN-loop GTPase 2 from Saccharomyces cerevisiae (strain ATCC 204508 / S288c) (Baker's yeast).